A 475-amino-acid chain; its full sequence is ATP synthase subunit beta 1 (475 aa).

Residue 152–159 (GGAGVGKT) participates in ATP binding.

The protein belongs to the ATPase alpha/beta chains family. As to quaternary structure, F-type ATPases have 2 components, CF(1) - the catalytic core - and CF(0) - the membrane proton channel. CF(1) has five subunits: alpha(3), beta(3), gamma(1), delta(1), epsilon(1). CF(0) has four main subunits: a(1), b(1), b'(1) and c(9-12).

Its subcellular location is the cell inner membrane. It carries out the reaction ATP + H2O + 4 H(+)(in) = ADP + phosphate + 5 H(+)(out). Its function is as follows. Produces ATP from ADP in the presence of a proton gradient across the membrane. The catalytic sites are hosted primarily by the beta subunits. The polypeptide is ATP synthase subunit beta 1 (Cereibacter sphaeroides (strain ATCC 17029 / ATH 2.4.9) (Rhodobacter sphaeroides)).